A 172-amino-acid chain; its full sequence is MAEKRNIFLVGPMGAGKSTIGRYLAQQLHMEFLDSDTVIEERTGADISWVFDVEGEEGFRKREEAVINDLTLEQGIVLATGGGSVKSRENRNRLSARGIVVYLETTIEKQLARTNRDKKRPLLQTDNPREVLESLAGERNPLYEEIADYTVRTDDQSAKVVANQIVKMLEES.

Position 14–19 (14–19 (GAGKST)) interacts with ATP. S18 serves as a coordination point for Mg(2+). The substrate site is built by D36, R60, and G82. Residue R120 participates in ATP binding. R139 is a substrate binding site. Q156 contributes to the ATP binding site.

Belongs to the shikimate kinase family. Monomer. Requires Mg(2+) as cofactor.

Its subcellular location is the cytoplasm. The enzyme catalyses shikimate + ATP = 3-phosphoshikimate + ADP + H(+). It participates in metabolic intermediate biosynthesis; chorismate biosynthesis; chorismate from D-erythrose 4-phosphate and phosphoenolpyruvate: step 5/7. Its function is as follows. Catalyzes the specific phosphorylation of the 3-hydroxyl group of shikimic acid using ATP as a cosubstrate. This chain is Shikimate kinase, found in Vibrio vulnificus (strain CMCP6).